The chain runs to 441 residues: Phosphoglucosamine mutase (441 aa).

Ser-100 functions as the Phosphoserine intermediate in the catalytic mechanism. Mg(2+)-binding residues include Ser-100, Asp-239, Asp-241, and Asp-243. Ser-100 bears the Phosphoserine mark.

Belongs to the phosphohexose mutase family. Requires Mg(2+) as cofactor. Post-translationally, activated by phosphorylation.

The catalysed reaction is alpha-D-glucosamine 1-phosphate = D-glucosamine 6-phosphate. Functionally, catalyzes the conversion of glucosamine-6-phosphate to glucosamine-1-phosphate. In Ruthia magnifica subsp. Calyptogena magnifica, this protein is Phosphoglucosamine mutase.